Consider the following 509-residue polypeptide: Kelch repeat protein M-T9 (509 aa).

One can recognise a BTB domain in the interval 15–79 (SDVTVVAGDS…MYAGCDGLND (65 aa)). Kelch repeat units follow at residues 274-320 (VLYC…IVNG), 321-368 (YIYV…YRNE), 370-415 (WIVG…VYNN), 416-463 (RLYC…VYNK), and 465-509 (IYVL…NDEI).

Belongs to the poxviruses Kelch family.

This chain is Kelch repeat protein M-T9, found in Myxoma virus (strain Lausanne) (MYXV).